The sequence spans 92 residues: Acyl-CoA-binding domain-containing protein 6 (92 aa).

The ACB domain occupies 3 to 88; sequence LKEEFEEHAE…VKQLLEVAAS (86 aa). An acyl-CoA-binding positions include 30–34, Lys-52, Lys-56, and Tyr-75; that span reads YGLYK.

The protein belongs to the ACBP family. In terms of assembly, interacts with PDLP8. Mostly expressed in seeds, stems, and siliques, and, to a lower extent, in leaves, flowers, and roots (at protein level). Highly expressed in root and shoot phloem companion cells.

The protein resides in the cytoplasm. It is found in the cell membrane. In terms of biological role, binds medium- and long-chain acyl-CoA esters with very high affinity. May function as an intracellular carrier of acyl-CoA esters. Confers resistance to cold and freezing. Interacts with phosphatidylcholine and derivatives, but not phosphatidic acid and lysophosphatidylcholine. May be involved in phospholipid metabolism. This Arabidopsis thaliana (Mouse-ear cress) protein is Acyl-CoA-binding domain-containing protein 6 (ACBP6).